The primary structure comprises 796 residues: Cadherin-11 (796 aa).

The N-terminal stretch at 1-24 is a signal peptide; it reads MKENYCLQAALVCLSMLYHSQAFA. Residues 25–53 constitute a propeptide that is removed on maturation; it reads LERRSHLHPSFHGHHEKGKEGQVLQRSKR. 5 consecutive Cadherin domains span residues 54 to 159, 160 to 268, 269 to 383, 384 to 486, and 487 to 612; these read GWVW…PPEF, LHEI…PPKF, PQSV…PPMF, LAPS…DNAP, and KFAA…YILN. At 54–617 the chain is on the extracellular side; it reads GWVWNQFFVI…AYILNAGLST (564 aa). 2 N-linked (GlcNAc...) asparagine glycosylation sites follow: N455 and N540. The chain crosses the membrane as a helical span at residues 618–640; sequence GALIAILACIVILLVIVVLFVTL. Topologically, residues 641 to 796 are cytoplasmic; it reads RRQKKEPLIV…GSKDTFDDDS (156 aa). S788 bears the Phosphoserine mark. T791 bears the Phosphothreonine mark.

In terms of assembly, interacts with PCDH8. Selectively expressed in osteoblastic cell lines, precursor cell lines of osteoblasts, and primary osteoblastic cells from calvaria, as well as in lung, testis, and brain tissues at low levels.

The protein localises to the cell membrane. Its function is as follows. Cadherins are calcium-dependent cell adhesion proteins. They preferentially interact with themselves in a homophilic manner in connecting cells; cadherins may thus contribute to the sorting of heterogeneous cell types. Required for proper focal adhesion assembly. Involved in the regulation of cell migration. This is Cadherin-11 (Cdh11) from Mus musculus (Mouse).